A 531-amino-acid chain; its full sequence is UDP-glucuronosyltransferase 1A6 (531 aa).

Positions 1-26 are cleaved as a signal peptide; sequence MACLLSAAQRASAGVLFVALWGTVLG. The N-linked (GlcNAc...) asparagine glycan is linked to Asn294. A helical transmembrane segment spans residues 489–505; it reads VIGFLLAIVLTVAFVTF.

The protein belongs to the UDP-glycosyltransferase family.

The protein resides in the microsome. Its subcellular location is the endoplasmic reticulum membrane. The enzyme catalyses glucuronate acceptor + UDP-alpha-D-glucuronate = acceptor beta-D-glucuronoside + UDP + H(+). The catalysed reaction is (5Z,8Z,11Z,14Z)-eicosatetraenoate + UDP-alpha-D-glucuronate = O-[(5Z),(8Z),(11Z),(14Z)-eicosatetraenoyl]-beta-D-glucuronate + UDP. It carries out the reaction 15-hydroxy-(5Z,8Z,11Z,13E)-eicosatetraenoate + UDP-alpha-D-glucuronate = 15-O-(beta-D-glucuronosyl)-(5Z,8Z,11Z,14Z)-eicosatetraenoate + UDP + H(+). It catalyses the reaction (E)-ferulate + UDP-alpha-D-glucuronate = (E)-4-O-(beta-D-glucuronosyl)-ferulate + UDP + H(+). The enzyme catalyses (E)-ferulate + UDP-alpha-D-glucuronate = (E)-ferulic acid beta-D-glucuronate ester + UDP. Functionally, UDP-glucuronosyltransferase (UGT) that catalyzes phase II biotransformation reactions in which lipophilic substrates are conjugated with glucuronic acid to facilitate their inactivation and excretion from the body. Essential for the elimination and detoxification of drugs, xenobiotics and endogenous compounds. Involved in the glucuronidation of arachidonic acid (AA) and AA-derived eicosanoids including 15-HETE and 20-HETE. Conjugates small planar phenolic molecules such as 4-nitrophenol, 1-naphthol, and 4-methylumbelliferone. The bulky phenol 4-hydroxybiphenyl, androgens and estrogens are not substrates. 2-hydroxybiphenyl is an excellent substrate. Involved in the glucuronidation of the phytochemical ferulic acid at the phenolic or the carboxylic acid group. The protein is UDP-glucuronosyltransferase 1A6 (UGT1) of Oryctolagus cuniculus (Rabbit).